A 513-amino-acid chain; its full sequence is Maturase K (513 aa).

The protein belongs to the intron maturase 2 family. MatK subfamily.

It localises to the plastid. The protein resides in the chloroplast. Functionally, usually encoded in the trnK tRNA gene intron. Probably assists in splicing its own and other chloroplast group II introns. This is Maturase K from Danthonia spicata (Poverty oatgrass).